The chain runs to 169 residues: Peptide deformylase 1 (169 aa).

2 residues coordinate Fe cation: Cys93 and His135. The active site involves Glu136. Fe cation is bound at residue His139.

It belongs to the polypeptide deformylase family. Requires Fe(2+) as cofactor.

It carries out the reaction N-terminal N-formyl-L-methionyl-[peptide] + H2O = N-terminal L-methionyl-[peptide] + formate. Functionally, removes the formyl group from the N-terminal Met of newly synthesized proteins. Requires at least a dipeptide for an efficient rate of reaction. N-terminal L-methionine is a prerequisite for activity but the enzyme has broad specificity at other positions. The polypeptide is Peptide deformylase 1 (Corynebacterium efficiens (strain DSM 44549 / YS-314 / AJ 12310 / JCM 11189 / NBRC 100395)).